Reading from the N-terminus, the 332-residue chain is 2,3-diketo-L-gulonate reductase (332 aa).

Histidine 44 acts as the Proton donor in catalysis. Residues 168–174 (ITMVDMS), 224–225 (WK), and 304–306 (GHE) contribute to the NAD(+) site.

It belongs to the LDH2/MDH2 oxidoreductase family. DlgD subfamily. In terms of assembly, homodimer.

The protein resides in the cytoplasm. It catalyses the reaction 3-dehydro-L-gulonate + NAD(+) = 2,3-dioxo-L-gulonate + NADH + H(+). The enzyme catalyses 3-dehydro-L-gulonate + NADP(+) = 2,3-dioxo-L-gulonate + NADPH + H(+). In terms of biological role, catalyzes the reduction of 2,3-diketo-L-gulonate in the presence of NADH, to form 3-keto-L-gulonate. The polypeptide is 2,3-diketo-L-gulonate reductase (Haemophilus influenzae (strain ATCC 51907 / DSM 11121 / KW20 / Rd)).